A 69-amino-acid chain; its full sequence is M-poneratoxin-Dq4e (69 aa).

A signal peptide spans 1-25 (MKLSAFTLAFALILMMAIMYNMAEA). Positions 26–39 (AALADADADAEAIA) are excised as a propeptide.

In terms of tissue distribution, expressed by the venom gland.

The protein localises to the secreted. Functionally, may have antimicrobial properties, like most ant linear peptides. In addition, when tested in vitro on the parasite Trypanosoma cruzi (responsible of the Chagas disease), is able to moderately reduce the number of the three forms (epimastigote, trypomastigote and amastigote) by inducing cell death through necrosis. In Dinoponera quadriceps (South American ant), this protein is M-poneratoxin-Dq4e.